A 236-amino-acid polypeptide reads, in one-letter code: Purine nucleoside phosphorylase DeoD-type (236 aa).

An a purine D-ribonucleoside-binding site is contributed by His5. Phosphate contacts are provided by residues Gly21, Arg25, Arg44, and 88–91; that span reads RIGS. Residues 180 to 182 and 204 to 205 each bind a purine D-ribonucleoside; these read EME and SD. The active-site Proton donor is Asp205.

Belongs to the PNP/UDP phosphorylase family. In terms of assembly, homohexamer; trimer of homodimers.

It catalyses the reaction a purine D-ribonucleoside + phosphate = a purine nucleobase + alpha-D-ribose 1-phosphate. The catalysed reaction is a purine 2'-deoxy-D-ribonucleoside + phosphate = a purine nucleobase + 2-deoxy-alpha-D-ribose 1-phosphate. Functionally, catalyzes the reversible phosphorolytic breakdown of the N-glycosidic bond in the beta-(deoxy)ribonucleoside molecules, with the formation of the corresponding free purine bases and pentose-1-phosphate. The sequence is that of Purine nucleoside phosphorylase DeoD-type from Tolumonas auensis (strain DSM 9187 / NBRC 110442 / TA 4).